A 1394-amino-acid polypeptide reads, in one-letter code: MDNEEENHYVSRLRDVYSSCDTTGTGFLDQEELTQLCTKLGLEEQLPALLHILLGDDRLARVNFEEFKEGFVAVLSSGSGVEPSDEEGSSSESATSCAVPPKYMSGSKWYGRRSLPELGDSATATKYGSEQQAKGSVKPPLRRSASLESVESLKSDEDAESAKEPQNELFEAQGQLRSWGCEVFGTLRKSCSPSFSTPENLVQGIWHELGIGSSGHLNEQELAVVCRSIGLHSLEKQELEELFSKLDQDGDGRVSLAEFQLGLFGHEPPSLPASSSLIKPNRLWSHYQEESGCHTTTTSSLVSVCSGLRLFSSVDDGSGFAFPEQVISAWAQEGIQNGREILQSLDFSVDEKVNLLELTWALDNELLTVDGVIQQAALACYRQELSYHQGQVDQLVQERDKARQDLEKAEKRNLDFVREMDDCHSALEQLTEKKIKHLEQEYRGRLSLLRSEVEMERELFWEQARRQRAVLEQDVGRLQAEETSLREKLTLALKENSRLQKEIIEVVEKLSDSEKLVLRLQSDLQFVLKDKLEPQSMELLAQEEQFTAILNDYELKCRDLQDRNDELQAELEGLRLRLPRSRQSPAGTPGTHRRRIPGRGPADNLFVGESTPVSLETEIMVEQMKEHYQELRMQLETKVNYYEKEIEVMKRNFEKDKKEMEQAFQLEVSVLEGQKADLEALYAKSQEVILGLKEQLQDAAQSPEPAPAGLAHCCAQALCTLAQRLEVEMHLRHQDQLLQIRQEAEEELNQKLSWLEAQHAACCESLSLQHQCEKDQLLQTHLQRVKDLAAQLDLEKGRREEREQEVLAHCRRQQLKLQAVMSEEQARICRSFTLEKEKLEQTYREQVEGLVQEADVLRALLKNGTTVVSDQQERTPSSMSLGPDSRQQPTARQAVSPDGRTGAPAEWPGPEKAEGRDFPGQLCSIDAMPSPTPTLLSRRSSENLGVRDNHQRPLNAEEGAIPKEPEPSARTLTGQGQKLPLPVHPQMLEPSLGTTALDRKAASVGVQGQASEGPVGDGEGVQEAWLQFRGEATRMRPSLPCSELPNPQEATVMPAMSESEMKDVKIKLLQLEDVVRALEKADSRESYRAELQRLSEENLVLKSDLGKIQLELETSESKNEVQRQEIEVLKRDKEQACCDLEELSTQTQKYKDEMSQLNCRVLQLEGEPSGLHTQKEENHGAIQVLMKKLEEAGCREEQQGDQIQNLKIELERVNEECQYLRLSQAELTESLEESRSQLYSVQLRLEAAQSQHGRIVQRLQEQMSQLVPGARVAELQHLLNVKEEEARRLSAQQEEYRQQLKAREDQVEDAEARLRNVEWLLQEKVEELRKQFEKNTRSDLLLKELYVENAHLMKAVQLTEEKQRGAEKKNCVLEEKVRALNKLISKMAPASLSV.

EF-hand domains follow at residues 8-43 and 42-77; these read HYVS…LGLE and LEEQ…VLSS. Disordered stretches follow at residues 77 to 99 and 126 to 166; these read SGSG…SCAV and KYGS…KEPQ. S149 bears the Phosphoserine mark. The segment covering 151 to 166 has biased composition (basic and acidic residues); that stretch reads ESLKSDEDAESAKEPQ. 2 EF-hand domains span residues 197–232 and 234–269; these read TPEN…IGLH and LEKQ…HEPP. Ca(2+)-binding residues include D247, D249, D251, R253, and E258. Coiled-coil stretches lie at residues 382-423, 461-515, and 544-584; these read RQEL…MDDC, WEQA…DSEK, and EQFT…SRQS. A KEN box motif is present at residues 494 to 496; it reads KEN. The disordered stretch occupies residues 578 to 602; sequence LPRSRQSPAGTPGTHRRRIPGRGPA. The D-box motif lies at 632–640; sequence RMQLETKVN. Residues 835-863 adopt a coiled-coil conformation; sequence EKEKLEQTYREQVEGLVQEADVLRALLKN. The segment covering 866 to 893 has biased composition (polar residues); the sequence is TVVSDQQERTPSSMSLGPDSRQQPTARQ. A disordered region spans residues 866 to 977; the sequence is TVVSDQQERT…SARTLTGQGQ (112 aa). A compositionally biased stretch (basic and acidic residues) spans 939 to 951; the sequence is RSSENLGVRDNHQ. Coiled-coil stretches lie at residues 1057 to 1229 and 1269 to 1331; these read SESE…ELTE and GARV…LRKQ.

In terms of assembly, interacts with gamma-tubulin and TUBGCP4. Interacts with anaphase promoting complex/cyclosome (APC/C). Interacts with CDC20 and FZR1. Interacts with LCA5 and USH2A. Post-translationally, phosphorylated by PLK1 which disrupts its centrosome association and interaction with gamma-tubulin. In terms of processing, ubiquitinated by the APC/C complex leading to its degradation.

It localises to the cytoplasm. Its subcellular location is the cytoskeleton. It is found in the microtubule organizing center. The protein localises to the centrosome. Functionally, involved in the microtubule organization in interphase cells. Overexpression induces the fragmentation of the Golgi, and causes lysosomes to disperse toward the cell periphery; it also interferes with mitotic spindle assembly. Involved in vesicle transport in photoreceptor cells. The polypeptide is Ninein-like protein (Ninl) (Mus musculus (Mouse)).